Consider the following 362-residue polypeptide: N-acylethanolamine-hydrolyzing acid amidase (362 aa).

The N-terminal stretch at 1-33 is a signal peptide; the sequence is MGTLATRAACHGAHLALALLLLLSLSGPWLSAV. 2 N-linked (GlcNAc...) asparagine glycosylation sites follow: Asn42 and Asn112. Cys131 serves as the catalytic Nucleophile. N-linked (GlcNAc...) asparagine glycosylation is found at Asn314 and Asn338.

Belongs to the acid ceramidase family. As to quaternary structure, heterodimer of an alpha and a beta subunit, produced by autocatalytic cleavage. N-glycosylated. Tunicamycin treatment causes a reduction in specific activity against N-palmitoylethanolamine. Post-translationally, autoproteolytic cleavage at pH 4.5 gives rise to the alpha and beta subunit. Cleavage gives rise to a conformation change that activates the enzyme. The same catalytic Cys residue mediates the autoproteolytic cleavage and subsequent hydrolysis of lipid substrates.

Its subcellular location is the lysosome. It localises to the membrane. The enzyme catalyses N-hexadecanoylethanolamine + H2O = ethanolamine + hexadecanoate. It catalyses the reaction an N-(long-chain fatty acyl)ethanolamine + H2O = a long-chain fatty acid + ethanolamine. It carries out the reaction N-dodecanoylethanolamine + H2O = dodecanoate + ethanolamine. The catalysed reaction is N-tetradecanoylethanolamine + H2O = tetradecanoate + ethanolamine. The enzyme catalyses an N-acylsphing-4-enine + H2O = sphing-4-enine + a fatty acid. It catalyses the reaction N-hexadecanoylsphing-4-enine + H2O = sphing-4-enine + hexadecanoate. It carries out the reaction N-dodecanoylsphing-4-enine + H2O = dodecanoate + sphing-4-enine. Its pathway is lipid metabolism; fatty acid metabolism. Degrades bioactive fatty acid amides to their corresponding acids, with the following preference: N-palmitoylethanolamine &gt; N-myristoylethanolamine &gt; N-stearoylethanolamine &gt; N-oleoylethanolamine &gt; N-linoleoylethanolamine &gt; N-arachidonoylethanolamine. In Mus musculus (Mouse), this protein is N-acylethanolamine-hydrolyzing acid amidase.